The following is a 92-amino-acid chain: Parbolysin P7 (92 aa).

3 disulfides stabilise this stretch: Cys-15-Cys-36, Cys-21-Cys-32, and Cys-46-Cys-59.

Belongs to the worm cytolysin family. In terms of tissue distribution, localized within the skin and proboscis and are most readily isolated from body mucus secretions.

The protein localises to the secreted. Cytolysin that shows hemolytic activity (on bovine erythrocytes, HC(50)=5.75 mg/ml). This hemolytic activity is completely inhibited by small unilamelar vesicles composed of PC/PG, PC/PI and PC/PS in 1:1 molar ratios (with at least 100 mg/ml concentration). In Parborlasia corrugatus (Antarctic nemertean worm), this protein is Parbolysin P7.